The following is a 214-amino-acid chain: U3 small nucleolar RNA-associated protein 16 (214 aa).

Positions methionine 1–alanine 10 are enriched in basic and acidic residues. Residues methionine 1–aspartate 106 form a disordered region. Serine 16 bears the Phosphoserine mark. Residues aspartate 22–serine 41 show a composition bias toward basic and acidic residues. Over residues aspartate 42 to glutamine 52 the composition is skewed to acidic residues. A phosphoserine mark is found at serine 45, serine 65, and serine 144. The segment covering glutamate 54 to arginine 75 has biased composition (basic and acidic residues). A disordered region spans residues serine 182–glycine 214. Basic and acidic residues predominate over residues proline 192 to leucine 206.

Belongs to the UTP16 family. In terms of assembly, part of the small subunit (SSU) processome composed of at least 40 protein subunits and the RNA chaperone small nucleolar RNA (snoRNA) U3. Interacts with snoRNA U3. Interacts with MPP10.

It localises to the nucleus. The protein localises to the nucleolus. In terms of biological role, functions as part of the small subunit (SSU) processome, first precursor of the small eukaryotic ribosomal subunit that coordinates the first two steps of ribosome biogenesis in transcription of the primary transcript pre-RNA and pre-18S processing. During the assembly of the SSU processome in the nucleolus, many ribosome biogenesis factors, an RNA chaperone and ribosomal proteins associate with the nascent pre-rRNA and work in concert to generate RNA folding, modifications, rearrangements and cleavage as well as targeted degradation of pre-ribosomal RNA by the RNA exosome. Has a role in bud site selection maybe via the regulation of expression of bipolar budding components. The sequence is that of U3 small nucleolar RNA-associated protein 16 (BUD21) from Saccharomyces cerevisiae (strain ATCC 204508 / S288c) (Baker's yeast).